The primary structure comprises 505 residues: 2,3-bisphosphoglycerate-independent phosphoglycerate mutase (505 aa).

Residues Asp-13 and Ser-63 each coordinate Mn(2+). Catalysis depends on Ser-63, which acts as the Phosphoserine intermediate. Residues His-124, 153-154, Arg-183, Arg-189, 254-257, and Lys-330 contribute to the substrate site; these read RD and RADR. Residues Asp-396, His-400, Asp-437, His-438, and His-456 each contribute to the Mn(2+) site.

It belongs to the BPG-independent phosphoglycerate mutase family. As to quaternary structure, monomer. The cofactor is Mn(2+).

It carries out the reaction (2R)-2-phosphoglycerate = (2R)-3-phosphoglycerate. It participates in carbohydrate degradation; glycolysis; pyruvate from D-glyceraldehyde 3-phosphate: step 3/5. Its function is as follows. Catalyzes the interconversion of 2-phosphoglycerate and 3-phosphoglycerate. The protein is 2,3-bisphosphoglycerate-independent phosphoglycerate mutase of Dinoroseobacter shibae (strain DSM 16493 / NCIMB 14021 / DFL 12).